Here is a 609-residue protein sequence, read N- to C-terminus: Neutral protease (609 aa).

The signal sequence occupies residues 1–24 (MNKTQRHINWLLAVSAATALPVTA). Positions 25–196 (AEMINVNDGS…VLQTWDGLNH (172 aa)) are excised as a propeptide. Residue His-343 coordinates Zn(2+). Residue Glu-344 is part of the active site. His-347 and Glu-367 together coordinate Zn(2+). His-426 acts as the Proton donor in catalysis.

This sequence belongs to the peptidase M4 family. Zn(2+) serves as cofactor.

The protein localises to the secreted. It catalyses the reaction Preferential cleavage of bonds with bulky hydrophobic groups in P2 and P1'. Phe at P1' is the most favored residue, which distinguished this enzyme from thermolysin.. Its function is as follows. Extracellular zinc metalloprotease. The chain is Neutral protease (nprV) from Vibrio proteolyticus (Aeromonas proteolytica).